A 307-amino-acid chain; its full sequence is Ribonuclease Z (307 aa).

The Zn(2+) site is built by His63, His65, Asp67, His68, His140, Asp211, and His269. The Proton acceptor role is filled by Asp67.

Belongs to the RNase Z family. As to quaternary structure, homodimer. The cofactor is Zn(2+).

It carries out the reaction Endonucleolytic cleavage of RNA, removing extra 3' nucleotides from tRNA precursor, generating 3' termini of tRNAs. A 3'-hydroxy group is left at the tRNA terminus and a 5'-phosphoryl group is left at the trailer molecule.. In terms of biological role, zinc phosphodiesterase, which displays some tRNA 3'-processing endonuclease activity. Probably involved in tRNA maturation, by removing a 3'-trailer from precursor tRNA. The chain is Ribonuclease Z from Bacillus licheniformis (strain ATCC 14580 / DSM 13 / JCM 2505 / CCUG 7422 / NBRC 12200 / NCIMB 9375 / NCTC 10341 / NRRL NRS-1264 / Gibson 46).